A 68-amino-acid chain; its full sequence is Large ribosomal subunit protein uL29 (68 aa).

This sequence belongs to the universal ribosomal protein uL29 family.

In Albidiferax ferrireducens (strain ATCC BAA-621 / DSM 15236 / T118) (Rhodoferax ferrireducens), this protein is Large ribosomal subunit protein uL29.